The sequence spans 568 residues: Phosphoprotein (568 aa).

The tract at residues 1–24 (MDQDAFFFERDPEAEGEAPRKQES) is disordered. Over residues 7–24 (FFERDPEAEGEAPRKQES) the composition is skewed to basic and acidic residues. Residues 33 to 41 (DVVLSYKPT) form an N0 binding region. The interval 45–324 (EDRSWLHNII…SNEEGTSNTS (280 aa)) is disordered. Composition is skewed to basic and acidic residues over residues 56-105 (NPKE…HARI), 129-144 (GDERNTRIDEDSPNER), and 151-167 (PTDEDRKMAENSNKREE). The segment covering 179–216 (GSTSLSDDGEGRTNNNGRSMETSSTHSTRITDVITNPS) has biased composition (polar residues). The segment covering 239-253 (TRSERTQNSELHKST) has biased composition (basic and acidic residues). Positions 295 to 304 (TTNNANNNAK) are enriched in low complexity. The tract at residues 344-411 (FELSRRASHQ…SSRDLHKRFS (68 aa)) is multimerization. Residues 387–416 (EENRTLLKQIQEEIDSSRDLHKRFSEYQKE) adopt a coiled-coil conformation. Residues 412-445 (EYQKEQNSLMMANLSTLHIITDRGGKTGDPSDTT) are l protein binding. Disordered regions lie at residues 434-455 (RGGKTGDPSDTTRSPSVFTKGK) and 493-513 (PVLEEHNNEPQASNASRLIPS). The segment covering 441 to 450 (PSDTTRSPSV) has biased composition (polar residues). Positions 479–568 (DLIREDELRE…FEEDIDSLTN (90 aa)) are interaction with the nucleocapsid (N-RNA).

This sequence belongs to the respirovirus P protein family. As to quaternary structure, homotetramer. Interacts (via multimerization domain) with polymerase L; this interaction forms the polymerase complex. Interacts (via N-terminus) with N0; this interaction allows P to chaperon N0 before encapsidation and form the N-P complex. Interacts (via C-terminus) with N-RNA template; this interaction positions the polymerase on the template.

In terms of biological role, essential cofactor of the RNA polymerase L that plays a central role in the transcription and replication by forming the polymerase complex with RNA polymerase L and recruiting L to the genomic N-RNA template for RNA synthesis. Also plays a central role in the encapsidation of nascent RNA chains by forming the encapsidation complex with the nucleocapsid protein N (N-P complex). Acts as a chaperone for newly synthesized free N protein, so-called N0, allowing encapsidation of nascent RNA chains during replication. The nucleoprotein protein N prevents excessive phosphorylation of P, which leads to down-regulation of viral transcription/ replication. Participates, together with N, in the formation of viral factories (viroplasms), which are large inclusions in the host cytoplasm where replication takes place. Recruits host PI4KB and remodel the host endoplasmic reticulum membrane to form viral replication factories. This Homo sapiens (Human) protein is Phosphoprotein (P/C).